The primary structure comprises 702 residues: Ribosomal RNA large subunit methyltransferase K/L (702 aa).

Residues Leu43–Leu154 enclose the THUMP domain.

This sequence belongs to the methyltransferase superfamily. RlmKL family.

The protein localises to the cytoplasm. It carries out the reaction guanosine(2445) in 23S rRNA + S-adenosyl-L-methionine = N(2)-methylguanosine(2445) in 23S rRNA + S-adenosyl-L-homocysteine + H(+). The catalysed reaction is guanosine(2069) in 23S rRNA + S-adenosyl-L-methionine = N(2)-methylguanosine(2069) in 23S rRNA + S-adenosyl-L-homocysteine + H(+). In terms of biological role, specifically methylates the guanine in position 2445 (m2G2445) and the guanine in position 2069 (m7G2069) of 23S rRNA. This chain is Ribosomal RNA large subunit methyltransferase K/L, found in Escherichia coli (strain SMS-3-5 / SECEC).